A 36-amino-acid chain; its full sequence is Photosystem I reaction center subunit VIII (36 aa).

The chain crosses the membrane as a helical span at residues 9–29; sequence IFVPLVGLVFPAIAMASLSLY.

It belongs to the PsaI family.

Its subcellular location is the plastid. It is found in the chloroplast thylakoid membrane. Functionally, may help in the organization of the PsaL subunit. This chain is Photosystem I reaction center subunit VIII, found in Phalaenopsis aphrodite subsp. formosana (Moth orchid).